The sequence spans 98 residues: Large ribosomal subunit protein uL23 (98 aa).

The protein belongs to the universal ribosomal protein uL23 family. As to quaternary structure, part of the 50S ribosomal subunit. Contacts protein L29, and trigger factor when it is bound to the ribosome.

Functionally, one of the early assembly proteins it binds 23S rRNA. One of the proteins that surrounds the polypeptide exit tunnel on the outside of the ribosome. Forms the main docking site for trigger factor binding to the ribosome. This chain is Large ribosomal subunit protein uL23, found in Rickettsia typhi (strain ATCC VR-144 / Wilmington).